The primary structure comprises 110 residues: Thiosulfate sulfurtransferase GlpE (110 aa).

The region spanning 17–105 is the Rhodanese domain; sequence RENGAQVVDI…WRSVYPADTS (89 aa). Cys-65 acts as the Cysteine persulfide intermediate in catalysis.

This sequence belongs to the GlpE family.

The protein resides in the cytoplasm. It catalyses the reaction thiosulfate + hydrogen cyanide = thiocyanate + sulfite + 2 H(+). The enzyme catalyses thiosulfate + [thioredoxin]-dithiol = [thioredoxin]-disulfide + hydrogen sulfide + sulfite + 2 H(+). Transferase that catalyzes the transfer of sulfur from thiosulfate to thiophilic acceptors such as cyanide or dithiols. May function in a CysM-independent thiosulfate assimilation pathway by catalyzing the conversion of thiosulfate to sulfite, which can then be used for L-cysteine biosynthesis. In Pseudomonas aeruginosa (strain ATCC 15692 / DSM 22644 / CIP 104116 / JCM 14847 / LMG 12228 / 1C / PRS 101 / PAO1), this protein is Thiosulfate sulfurtransferase GlpE.